Consider the following 527-residue polypeptide: Heat shock factor protein HSF8 (527 aa).

The segment covering 1-13 has biased composition (low complexity); the sequence is MEPNSSGSGKAAV. Disordered regions lie at residues 1–37, 130–160, 243–275, 300–343, and 476–501; these read MEPN…PSAN, RRKP…HSAS, NESN…ADGQ, SPRL…TSGK, and QSPS…QING. Positions 25–37 are enriched in pro residues; the sequence is QPAPAPAPMPSAN. The DNA-binding element occupies 39 to 133; that stretch reads PPPFLVKTYD…LLKSISRRKP (95 aa). Over residues 136-157 the composition is skewed to low complexity; it reads GHAQQQQQPHGHAQQQMQPPGH. Composition is skewed to polar residues over residues 319-328 and 491-501; these read SPQSNASSGR and NTSETKPQING.

It belongs to the HSF family. As to quaternary structure, homotrimer. In terms of processing, exhibits temperature-dependent phosphorylation.

Its subcellular location is the nucleus. Its function is as follows. DNA-binding protein that specifically binds heat shock promoter elements (HSE) and activates transcription. This Solanum peruvianum (Peruvian tomato) protein is Heat shock factor protein HSF8 (HSF8).